The following is a 462-amino-acid chain: PTS system mannitol-specific cryptic EIICB component (462 aa).

At 1-24 the chain is on the cytoplasmic side; it reads MENKSARAKVQAFGGFLTAMVIPN. The region spanning 13–344 is the PTS EIIC type-2 domain; it reads FGGFLTAMVI…LKMEKTVETE (332 aa). Residues 25–46 form a helical membrane-spanning segment; sequence IGAFIAWGFITALFIPTGWLPN. Topologically, residues 47–50 are periplasmic; that stretch reads EHFA. The helical transmembrane segment at 51–71 threads the bilayer; sequence KIVGPMITYLLPVMIGSTGGH. The Cytoplasmic segment spans residues 72–134; the sequence is LVGGKRGAVM…AGFEMVINNF (63 aa). Residues 135–156 form a helical membrane-spanning segment; it reads SLGIAGMLLCLLGFEVIGPAVL. Residues 157-165 are Periplasmic-facing; the sequence is IANTFVKEC. Residues 166–186 traverse the membrane as a helical segment; the sequence is IEALVHAGYLPLLSVINEPAK. Residues 187–273 lie on the Cytoplasmic side of the membrane; sequence VLFLNNAIDQ…VLMKPLTIIA (87 aa). Residues 274 to 293 traverse the membrane as a helical segment; the sequence is MIAGGMSGTWMFNLLDGGLV. Topologically, residues 294-313 are periplasmic; the sequence is AGPSPGSIFAYLALTPKGSF. A helical membrane pass occupies residues 314–335; it reads LATIAGVTVGTLVSFAITSLIL. The Cytoplasmic portion of the chain corresponds to 336–462; the sequence is KMEKTVETES…FNQLTAEHKH (127 aa). One can recognise a PTS EIIB type-2 domain in the interval 371-461; it reads KRIAFVCDAG…LFNQLTAEHK (91 aa). Cys377 functions as the Phosphocysteine intermediate; for EIIB activity in the catalytic mechanism. Cys377 carries the phosphocysteine; by EIIA modification.

The protein resides in the cell inner membrane. The enzyme catalyses D-mannitol(out) + N(pros)-phospho-L-histidyl-[protein] = D-mannitol 1-phosphate(in) + L-histidyl-[protein]. Functionally, the phosphoenolpyruvate-dependent sugar phosphotransferase system (sugar PTS), a major carbohydrate active transport system, catalyzes the phosphorylation of incoming sugar substrates concomitantly with their translocation across the cell membrane. The enzyme II CmtAB PTS system is involved in D-mannitol transport. The protein is PTS system mannitol-specific cryptic EIICB component (cmtA) of Escherichia coli O157:H7.